Reading from the N-terminus, the 692-residue chain is Proprotein convertase subtilisin/kexin type 9 (692 aa).

A signal peptide spans methionine 1–alanine 30. A propeptide spanning residues glutamine 31–glutamine 152 is cleaved from the precursor. Tyrosine 38 is subject to Sulfotyrosine. A Phosphoserine modification is found at serine 47. The 73-residue stretch at threonine 77 to valine 149 folds into the Inhibitor I9 domain. In terms of domain architecture, Peptidase S8 spans proline 155–leucine 444. Catalysis depends on charge relay system residues aspartate 186 and histidine 226. 2 disulfides stabilise this stretch: cysteine 223-cysteine 255 and cysteine 323-cysteine 358. Serine 386 (charge relay system) is an active-site residue. The interval arginine 450–glutamine 692 is C-terminal domain. Cystine bridges form between cysteine 457/cysteine 527, cysteine 477/cysteine 526, and cysteine 486/cysteine 509. A glycan (N-linked (GlcNAc...) asparagine) is linked at asparagine 533. 6 disulfide bridges follow: cysteine 534–cysteine 601, cysteine 552–cysteine 600, cysteine 562–cysteine 588, cysteine 608–cysteine 679, cysteine 626–cysteine 678, and cysteine 635–cysteine 654. The residue at position 688 (serine 688) is a Phosphoserine.

This sequence belongs to the peptidase S8 family. Monomer. Can self-associate to form dimers and higher multimers which may have increased LDLR degrading activity. The precursor protein but not the mature protein may form multimers. Interacts with APOB, VLDLR, LRP8/APOER2 and BACE1. The full-length immature form (pro-PCSK9) interacts with SCNN1A, SCNN1B and SCNN1G. The pro-PCSK9 form (via C-terminal domain) interacts with LDLR. Interacts (via the C-terminal domain) with ANXA2 (via repeat Annexin 1); the interaction inhibits the degradation of LDLR. Ca(2+) serves as cofactor. Post-translationally, cleavage by furin and PCSK5 generates a truncated inactive protein that is unable to induce LDLR degradation. In terms of processing, undergoes autocatalytic cleavage in the endoplasmic reticulum to release the propeptide from the N-terminus and the cleavage of the propeptide is strictly required for its maturation and activation. The cleaved propeptide however remains associated with the catalytic domain through non-covalent interactions, preventing potential substrates from accessing its active site. As a result, it is secreted from cells as a propeptide-containing, enzymatically inactive protein. Phosphorylation protects the propeptide against proteolysis.

The protein resides in the cytoplasm. It localises to the secreted. It is found in the endosome. The protein localises to the lysosome. Its subcellular location is the cell surface. The protein resides in the endoplasmic reticulum. It localises to the golgi apparatus. With respect to regulation, its proteolytic activity is autoinhibited by the non-covalent binding of the propeptide to the catalytic domain. Inhibited by EGTA. In terms of biological role, crucial player in the regulation of plasma cholesterol homeostasis. Binds to low-density lipid receptor family members: low density lipoprotein receptor (LDLR), very low density lipoprotein receptor (VLDLR), apolipoprotein E receptor (LRP1/APOER) and apolipoprotein receptor 2 (LRP8/APOER2), and promotes their degradation in intracellular acidic compartments. Acts via a non-proteolytic mechanism to enhance the degradation of the hepatic LDLR through a clathrin LDLRAP1/ARH-mediated pathway. May prevent the recycling of LDLR from endosomes to the cell surface or direct it to lysosomes for degradation. Can induce ubiquitination of LDLR leading to its subsequent degradation. Inhibits intracellular degradation of APOB via the autophagosome/lysosome pathway in a LDLR-independent manner. Involved in the disposal of non-acetylated intermediates of BACE1 in the early secretory pathway. Inhibits epithelial Na(+) channel (ENaC)-mediated Na(+) absorption by reducing ENaC surface expression primarily by increasing its proteasomal degradation. Regulates neuronal apoptosis via modulation of LRP8/APOER2 levels and related anti-apoptotic signaling pathways. The protein is Proprotein convertase subtilisin/kexin type 9 (PCSK9) of Macaca mulatta (Rhesus macaque).